Consider the following 671-residue polypeptide: Leucine aminopeptidase 2 (671 aa).

Residues 184–186 (QLE) and 311–316 (PYGGME) contribute to the substrate site. Histidine 340 is a Zn(2+) binding site. Glutamate 341 (proton acceptor) is an active-site residue. Residues histidine 344 and glutamate 363 each coordinate Zn(2+). The Proton donor role is filled by tyrosine 429.

The protein belongs to the peptidase M1 family. Zn(2+) is required as a cofactor.

It is found in the cytoplasm. The protein localises to the nucleus. The catalysed reaction is an epoxide + H2O = an ethanediol. With respect to regulation, inhibited by 3-(4-benzyloxyphenyl)-2-(R)-amino-1-propanethiol (thioamine) and N-hydroxy-N-(2-(S)-amino-3-(4-benzyloxyphenyl)propyl)-5-carboxypen-tanamide (hydroxamic acid). The aminopeptidase activity is stimulated by LTA(4). Aminopeptidase that preferentially cleaves di- and tripeptides. Also has low epoxide hydrolase activity (in vitro). Can hydrolyze the epoxide leukotriene LTA(4) but it forms preferentially 5,6-dihydroxy-7,9,11,14-eicosatetraenoic acid rather than the cytokine leukotriene B(4) as the product compared to the homologous mammalian enzyme (in vitro). This is Leucine aminopeptidase 2 from Saccharomyces cerevisiae (strain YJM789) (Baker's yeast).